The sequence spans 63 residues: Hyphancin-3D (63 aa).

The first 22 residues, 1–22 (MNFSRIIFLVFACFVALASVSA), serve as a signal peptide directing secretion. Positions 23–26 (APEP) are cleaved as a propeptide — removed by a dipeptidylpeptidase. L61 carries the leucine amide modification.

It belongs to the cecropin family.

The protein localises to the secreted. Has antibacterial activity. This is Hyphancin-3D from Hyphantria cunea (Fall webworm moth).